The sequence spans 344 residues: GDSL esterase/lipase At2g19010 (344 aa).

An N-terminal signal peptide occupies residues 1–21 (MSKACWLVAAIIFTAATVVYG). The active-site Nucleophile is the Ser-33. Asn-303 carries N-linked (GlcNAc...) asparagine glycosylation. Active-site residues include Asp-311 and His-314.

The protein belongs to the 'GDSL' lipolytic enzyme family.

Its subcellular location is the secreted. The protein is GDSL esterase/lipase At2g19010 of Arabidopsis thaliana (Mouse-ear cress).